A 744-amino-acid chain; its full sequence is Cullin-3 (744 aa).

In terms of domain architecture, Cullin neddylation spans 677–736 (MELSAIIVRIMKTEGKLSHQQLLERTTKRTQSRLSLTPSILKRSIQLLIEKEYIQRNADD). A Glycyl lysine isopeptide (Lys-Gly) (interchain with G-Cter in NEDD8) cross-link involves residue K688.

Belongs to the cullin family. In terms of assembly, component of a ubiquitin-protein ligase complex consisting of the cullin CUL3, the linker protein ELC1, the substrate receptor ELA1, and the RING protein HRT1. Post-translationally, neddylated; enhancing the ubiquitin-ligase activity.

The protein operates within protein modification; protein ubiquitination. Its function is as follows. As part of the CRL3 E3 ubiquitin ligase complex; polyubiquitylates monoubiquitylated RNA polymerase II subunit RPO21 to trigger its proteolysis; plays a role in global genomic repair. The sequence is that of Cullin-3 (CUL3) from Saccharomyces cerevisiae (strain ATCC 204508 / S288c) (Baker's yeast).